A 704-amino-acid chain; its full sequence is DNA-directed DNA polymerase (704 aa).

Residues 1–187 are 3'-5'exonuclease; that stretch reads MIVSDIEANA…TKALLEKLLS (187 aa). 3 residues coordinate Mg(2+): D5, E7, and D174. The polymerase stretch occupies residues 202–704; it reads GYTTFWSESL…KMGPNWAICH (503 aa). Positions 262–338 are binding to host TrxA; sequence GSWYQPKGGT…VEHVVFNPSS (77 aa). Mg(2+) contacts are provided by D475 and A476. H506, R518, K522, and Y526 together coordinate substrate. Residue D654 coordinates Mg(2+).

This sequence belongs to the DNA polymerase type-A family. Composed of two subunits. One is encoded by the phage and the other is encoded by the host thioredoxin. Interacts with DNA primase/helicase; this interaction is essential for the coordination of DNA unwinding and nucleotide polymerization on duplex DNA. Interacts with the ssDNA-binding protein. Part of the replicase complex that includes the DNA polymerase, thioredoxin, the primase/helicase and the single-stranded DNA binding protein. Mg(2+) serves as cofactor.

The catalysed reaction is DNA(n) + a 2'-deoxyribonucleoside 5'-triphosphate = DNA(n+1) + diphosphate. Functionally, replicates viral genomic DNA. This polymerase possesses two enzymatic activities: DNA synthesis (polymerase) and an exonucleolytic activity that degrades single-stranded DNA in the 3'-5' direction. Non-processive DNA polymerase that achieves processivity by binding to host thioredoxin (TrxA). This interaction increases the rate of dNTP incorporation to yield a processivity of approximately 800 nucleotides (nt) per binding event. Interacts with DNA helicase gp4 to coordinate nucleotide polymerization with unwinding of the DNA. The leading strand is synthesized continuously while synthesis of the lagging strand requires the synthesis of oligoribonucleotides by the primase domain of gp4. This chain is DNA-directed DNA polymerase, found in Escherichia phage T7 (Bacteriophage T7).